Consider the following 163-residue polypeptide: Peptide methionine sulfoxide reductase MsrA 1 (163 aa).

Residue Cys-21 is part of the active site.

The protein belongs to the MsrA Met sulfoxide reductase family.

The enzyme catalyses L-methionyl-[protein] + [thioredoxin]-disulfide + H2O = L-methionyl-(S)-S-oxide-[protein] + [thioredoxin]-dithiol. It catalyses the reaction [thioredoxin]-disulfide + L-methionine + H2O = L-methionine (S)-S-oxide + [thioredoxin]-dithiol. Its function is as follows. Has an important function as a repair enzyme for proteins that have been inactivated by oxidation. Catalyzes the reversible oxidation-reduction of methionine sulfoxide in proteins to methionine. In Nostoc sp. (strain PCC 7120 / SAG 25.82 / UTEX 2576), this protein is Peptide methionine sulfoxide reductase MsrA 1 (msrA1).